Consider the following 396-residue polypeptide: MSDVIKKFLKLEAASGIILIMAAMLAMILANSGLAGSYQAFLDTQVQVRIAALDINKPLLLWINDGFMAVFFLLVGLEVKREMLEGALSSRVQATFPAIAAVGGMLAPALIYAFFNYSDEVARAGWAIPAATDIAFALGVMALLGKRVPVSLKVFLLALAIMDDLGVIIIIALFYTQQLSLTALAIGILATLTLLWMNRRGEDRISLYMLVGLVLWVAVLKSGVHATLAGVIVGFMIPLSGKRYASPLKQLEHALHPWSAYLILPLFAFANAGVSLEGIGLSALLSPVPLGIMLGLFIGKPLGVFTISWLAVKLGIAQLPNGVNFKQIFAVSILCGIGFTMSMFIASLAFEHGGLDYGSYSRLGILVGSTLAAIVGYLALRIALPNREADQSTEGL.

A run of 11 helical transmembrane segments spans residues 16–36 (GIIL…GLAG), 59–79 (LLLW…GLEV), 95–115 (TFPA…YAFF), 124–144 (AGWA…MALL), 154–174 (VFLL…IALF), 178–198 (QLSL…LWMN), 213–233 (LVLW…GVIV), 254–274 (ALHP…NAGV), 278–298 (GIGL…GLFI), 328–348 (IFAV…IASL), and 363–383 (LGIL…LRIA).

Belongs to the NhaA Na(+)/H(+) (TC 2.A.33) antiporter family.

It localises to the cell inner membrane. It carries out the reaction Na(+)(in) + 2 H(+)(out) = Na(+)(out) + 2 H(+)(in). Its function is as follows. Na(+)/H(+) antiporter that extrudes sodium in exchange for external protons. This Aeromonas hydrophila subsp. hydrophila (strain ATCC 7966 / DSM 30187 / BCRC 13018 / CCUG 14551 / JCM 1027 / KCTC 2358 / NCIMB 9240 / NCTC 8049) protein is Na(+)/H(+) antiporter NhaA.